The following is an 872-amino-acid chain: Alanine--tRNA ligase (872 aa).

Histidine 567, histidine 571, cysteine 669, and histidine 673 together coordinate Zn(2+).

It belongs to the class-II aminoacyl-tRNA synthetase family. The cofactor is Zn(2+).

The protein resides in the cytoplasm. It carries out the reaction tRNA(Ala) + L-alanine + ATP = L-alanyl-tRNA(Ala) + AMP + diphosphate. Its function is as follows. Catalyzes the attachment of alanine to tRNA(Ala) in a two-step reaction: alanine is first activated by ATP to form Ala-AMP and then transferred to the acceptor end of tRNA(Ala). Also edits incorrectly charged Ser-tRNA(Ala) and Gly-tRNA(Ala) via its editing domain. This Streptococcus pneumoniae (strain CGSP14) protein is Alanine--tRNA ligase.